A 1062-amino-acid polypeptide reads, in one-letter code: Carbamoyl phosphate synthase large chain (1062 aa).

The interval 1–401 (MPKRTDIHKI…AMQKAVQSLE (401 aa)) is carboxyphosphate synthetic domain. Arg129, Arg169, Gly175, Gly176, Lys208, Ile210, Glu215, Gly241, Ile242, His243, Gln284, and Glu298 together coordinate ATP. The ATP-grasp 1 domain maps to 133-327 (KELCQKLGEP…IAKMAAKIAI (195 aa)). Gln284, Glu298, and Asn300 together coordinate Mg(2+). Gln284, Glu298, and Asn300 together coordinate Mn(2+). The interval 402-546 (IDEKDLYSAK…YSTYDGENES (145 aa)) is oligomerization domain. Residues 547 to 929 (RKSGKKSVIV…ALYKAFAGAK (383 aa)) are carbamoyl phosphate synthetic domain. The region spanning 671–861 (DQIIKSLHLH…MAQVATRVIM (191 aa)) is the ATP-grasp 2 domain. Arg707, Asp746, Leu748, Glu752, Gly777, Val778, His779, Ser780, Gln820, and Glu832 together coordinate ATP. Mg(2+) is bound by residues Gln820, Glu832, and Asn834. Residues Gln820, Glu832, and Asn834 each coordinate Mn(2+). The MGS-like domain occupies 930-1062 (MQLPENGNVL…NRSFATDALK (133 aa)). The allosteric domain stretch occupies residues 930–1062 (MQLPENGNVL…NRSFATDALK (133 aa)).

The protein belongs to the CarB family. As to quaternary structure, composed of two chains; the small (or glutamine) chain promotes the hydrolysis of glutamine to ammonia, which is used by the large (or ammonia) chain to synthesize carbamoyl phosphate. Tetramer of heterodimers (alpha,beta)4. Requires Mg(2+) as cofactor. Mn(2+) is required as a cofactor.

The enzyme catalyses hydrogencarbonate + L-glutamine + 2 ATP + H2O = carbamoyl phosphate + L-glutamate + 2 ADP + phosphate + 2 H(+). It catalyses the reaction hydrogencarbonate + NH4(+) + 2 ATP = carbamoyl phosphate + 2 ADP + phosphate + 2 H(+). It functions in the pathway amino-acid biosynthesis; L-arginine biosynthesis; carbamoyl phosphate from bicarbonate: step 1/1. The protein operates within pyrimidine metabolism; UMP biosynthesis via de novo pathway; (S)-dihydroorotate from bicarbonate: step 1/3. Its function is as follows. Large subunit of the glutamine-dependent carbamoyl phosphate synthetase (CPSase). CPSase catalyzes the formation of carbamoyl phosphate from the ammonia moiety of glutamine, carbonate, and phosphate donated by ATP, constituting the first step of 2 biosynthetic pathways, one leading to arginine and/or urea and the other to pyrimidine nucleotides. The large subunit (synthetase) binds the substrates ammonia (free or transferred from glutamine from the small subunit), hydrogencarbonate and ATP and carries out an ATP-coupled ligase reaction, activating hydrogencarbonate by forming carboxy phosphate which reacts with ammonia to form carbamoyl phosphate. This is Carbamoyl phosphate synthase large chain from Lactobacillus helveticus (strain DPC 4571).